The chain runs to 225 residues: Esterase OVCA2 (225 aa).

Residues Ser-119, Asp-177, and His-204 each act as charge relay system in the active site.

The protein belongs to the LovG family. Strongly expressed in kidney and liver. Moderately expressed in brain, skin and testis. Weakly expressed in heart, lung, small intestine, spleen, stomach and thymus.

It carries out the reaction a carboxylic ester + H2O = an alcohol + a carboxylate + H(+). Its function is as follows. Exhibits ester hydrolase activity with a strong preference for long-chain alkyl ester substrates and high selectivity against a variety of short, branched, and substituted esters. Is able to hydrolyze ester bonds within a wide range of p-nitrophenyl derivatives (C2-C14) in vitro, with a strong preference toward substrates of &gt;8 carbons. This is Esterase OVCA2 (Ovca2) from Mus musculus (Mouse).